We begin with the raw amino-acid sequence, 404 residues long: Formate-dependent phosphoribosylglycinamide formyltransferase (404 aa).

Residues 25-26 (EL) and Glu-85 contribute to the N(1)-(5-phospho-beta-D-ribosyl)glycinamide site. ATP-binding positions include Arg-118, Lys-159, 164-169 (SSGKGQ), 199-202 (EGFI), and Glu-207. The 196-residue stretch at 123 to 318 (RLAAEELGLA…EFELHARAIL (196 aa)) folds into the ATP-grasp domain. Mg(2+) contacts are provided by Glu-277 and Glu-289. Residues Asp-296, Lys-365, and 372–373 (RR) each bind N(1)-(5-phospho-beta-D-ribosyl)glycinamide.

It belongs to the PurK/PurT family. In terms of assembly, homodimer.

The catalysed reaction is N(1)-(5-phospho-beta-D-ribosyl)glycinamide + formate + ATP = N(2)-formyl-N(1)-(5-phospho-beta-D-ribosyl)glycinamide + ADP + phosphate + H(+). The protein operates within purine metabolism; IMP biosynthesis via de novo pathway; N(2)-formyl-N(1)-(5-phospho-D-ribosyl)glycinamide from N(1)-(5-phospho-D-ribosyl)glycinamide (formate route): step 1/1. In terms of biological role, involved in the de novo purine biosynthesis. Catalyzes the transfer of formate to 5-phospho-ribosyl-glycinamide (GAR), producing 5-phospho-ribosyl-N-formylglycinamide (FGAR). Formate is provided by PurU via hydrolysis of 10-formyl-tetrahydrofolate. This Burkholderia vietnamiensis (strain G4 / LMG 22486) (Burkholderia cepacia (strain R1808)) protein is Formate-dependent phosphoribosylglycinamide formyltransferase.